The following is a 131-amino-acid chain: Fumarate reductase subunit C (131 aa).

The next 3 helical transmembrane spans lie at 30-50, 57-77, and 109-129; these read EGTA…LFAL, WAGF…LITL, and IIKS…FVAL.

It belongs to the FrdC family. Part of an enzyme complex containing four subunits: a flavoprotein (FrdA), an iron-sulfur protein (FrdB), and two hydrophobic anchor proteins (FrdC and FrdD).

The protein localises to the cell inner membrane. Functionally, two distinct, membrane-bound, FAD-containing enzymes are responsible for the catalysis of fumarate and succinate interconversion; fumarate reductase is used in anaerobic growth, and succinate dehydrogenase is used in aerobic growth. Anchors the catalytic components of the fumarate reductase complex to the cell inner membrane, binds quinones. This chain is Fumarate reductase subunit C, found in Shigella flexneri.